We begin with the raw amino-acid sequence, 380 residues long: Palmitoyltransferase ZDHHC18 (380 aa).

Residues 1–59 are disordered; that stretch reads MKDCEYQQISPGAAPPPASPGARRPGPAAPPAPSPGPAPGAPRWSGSGSGSGSLGRRPR. The Cytoplasmic segment spans residues 1-82; that stretch reads MKDCEYQQIS…CGGRLMLAGH (82 aa). The residue at position 19 (serine 19) is a Phosphoserine. The segment covering 27–40 has biased composition (pro residues); it reads PAAPPAPSPGPAPG. A helical membrane pass occupies residues 83–103; the sequence is GGVFALTLLLILSTTILFFVF. Over 104 to 111 the chain is Lumenal; it reads DCPYLART. Residues 112–132 form a helical membrane-spanning segment; that stretch reads LTLAIPIIAAILFFFVMSCLL. Topologically, residues 133-227 are cytoplasmic; sequence QTSFTDPGIL…GNCVGRRNYR (95 aa). The DHHC domain maps to 184–234; that stretch reads KYCFTCKMFRPPRTSHCSVCDNCVERFDHHCPWVGNCVGRRNYRFFYAFIL. The S-palmitoyl cysteine intermediate role is filled by cysteine 214. Residues 228–248 form a helical membrane-spanning segment; the sequence is FFYAFILSLSFLTAFIFACVV. The Lumenal segment spans residues 249 to 269; sequence THLTLLSQGSNFLSALKKTPA. The chain crosses the membrane as a helical span at residues 270-290; the sequence is SVLELVICFFSIWSILGLSGF. The Cytoplasmic portion of the chain corresponds to 291–380; that stretch reads HTYLVASNLT…PDASMVGGHP (90 aa). The segment at 355-380 is disordered; sequence ALPSPIRSDDPACGAKPDASMVGGHP.

The protein belongs to the DHHC palmitoyltransferase family. ERF2/ZDHHC9 subfamily. As to expression, ubiquitously expressed.

It is found in the golgi apparatus membrane. The catalysed reaction is L-cysteinyl-[protein] + hexadecanoyl-CoA = S-hexadecanoyl-L-cysteinyl-[protein] + CoA. Functionally, palmitoyltransferase that catalyzes the addition of palmitate onto various protein substrates, such as CGAS, HRAS and LCK. Palmitoylates HRAS and LCK. Acts as a negative regulator of the cGAS-STING pathway be mediating palmitoylation and inactivation of CGAS. May also have a palmitoyltransferase activity toward the beta-2 adrenergic receptor/ADRB2 and therefore regulate G protein-coupled receptor signaling. The chain is Palmitoyltransferase ZDHHC18 from Mus musculus (Mouse).